The following is a 535-amino-acid chain: Ankyrin repeat domain-containing protein 34C (535 aa).

4 ANK repeats span residues 10 to 39 (TDGNSLLKAVWLGRLRLTRLLLEGGAYINE), 43 to 80 (KGETALMVACITKHVDQQSISKSKMVKYLLDNRADPNI), 84 to 114 (SGKTALIHACIRRAGGEVVSLLLENGADPSL), and 118 to 147 (TGASALVYAINADDKDALKHLLDACKAKGK). Disordered stretches follow at residues 159 to 181 (SGTKTTKQYLNVPPSPKVEDRHS) and 214 to 237 (AGHPSSCNTSKAVNEPGSPTRKVS). The segment covering 216–225 (HPSSCNTSKA) has biased composition (polar residues). S301 is subject to Phosphoserine. Positions 381–444 (DLDIQPGPDP…RRRPPHLLER (64 aa)) are disordered. Residue S447 is modified to Phosphoserine.

Belongs to the ANKRD34 family.

The sequence is that of Ankyrin repeat domain-containing protein 34C (ANKRD34C) from Homo sapiens (Human).